Reading from the N-terminus, the 66-residue chain is ATP synthase subunit c (66 aa).

The next 2 helical transmembrane spans lie at 3-23 (LTFF…GMLM) and 45-65 (IMGI…SFVI).

This sequence belongs to the ATPase C chain family. As to quaternary structure, F-type ATPases have 2 components, F(1) - the catalytic core - and F(0) - the membrane proton channel. F(1) has five subunits: alpha(3), beta(3), gamma(1), delta(1), epsilon(1). F(0) has three main subunits: a(1), b(2) and c(10-14). The alpha and beta chains form an alternating ring which encloses part of the gamma chain. F(1) is attached to F(0) by a central stalk formed by the gamma and epsilon chains, while a peripheral stalk is formed by the delta and b chains.

Its subcellular location is the cell membrane. In terms of biological role, f(1)F(0) ATP synthase produces ATP from ADP in the presence of a proton or sodium gradient. F-type ATPases consist of two structural domains, F(1) containing the extramembraneous catalytic core and F(0) containing the membrane proton channel, linked together by a central stalk and a peripheral stalk. During catalysis, ATP synthesis in the catalytic domain of F(1) is coupled via a rotary mechanism of the central stalk subunits to proton translocation. Functionally, key component of the F(0) channel; it plays a direct role in translocation across the membrane. A homomeric c-ring of between 10-14 subunits forms the central stalk rotor element with the F(1) delta and epsilon subunits. This Streptococcus oralis protein is ATP synthase subunit c (atpE).